A 319-amino-acid chain; its full sequence is Thioredoxin reductase (319 aa).

37-44 (ERGVPGGQ) lines the FAD pocket. Cys136 and Cys139 are joined by a disulfide. 279–288 (DVRAKSLRQI) provides a ligand contact to FAD.

It belongs to the class-II pyridine nucleotide-disulfide oxidoreductase family. Homodimer. The cofactor is FAD.

The protein localises to the cytoplasm. It carries out the reaction [thioredoxin]-dithiol + NADP(+) = [thioredoxin]-disulfide + NADPH + H(+). The sequence is that of Thioredoxin reductase (trxB) from Listeria innocua serovar 6a (strain ATCC BAA-680 / CLIP 11262).